We begin with the raw amino-acid sequence, 172 residues long: R-phycocyanin-1 beta chain (172 aa).

N72 is modified (N4-methylasparagine). C82 serves as a coordination point for (2R,3E)-phycocyanobilin. C153 contacts (2R,3E)-phycoerythrobilin.

It belongs to the phycobiliprotein family. In terms of assembly, heterodimer of an alpha and a beta chain. Dimers further assemble into trimers and the trimers into hexamers. The basic functional unit of phycobiliproteins is a ring-shaped hexamer formed from two back-to-back trimers contacting via the alpha chain subunits. The trimers are composed of alpha/beta subunit heterodimers arranged around a three-fold axis of symmetry. The phycoerythrins also contain a gamma subunit which is located in the center of the hexamer. In terms of processing, contains two covalently linked bilin chromophores.

The protein resides in the plastid. It localises to the chloroplast thylakoid membrane. Its function is as follows. Light-harvesting photosynthetic bile pigment-protein from the phycobiliprotein complex (phycobilisome, PBS). Phycocyanin is the major phycobiliprotein in the PBS rod. The protein is R-phycocyanin-1 beta chain (rpcB) of Porphyridium purpureum (Red alga).